Reading from the N-terminus, the 215-residue chain is Ribose-5-phosphate isomerase A (215 aa).

Residues 26–29 (TGST), 79–82 (DGAD), and 92–95 (KGGG) contribute to the substrate site. E101 serves as the catalytic Proton acceptor. A substrate-binding site is contributed by K119.

Belongs to the ribose 5-phosphate isomerase family. As to quaternary structure, homodimer.

It carries out the reaction aldehydo-D-ribose 5-phosphate = D-ribulose 5-phosphate. It functions in the pathway carbohydrate degradation; pentose phosphate pathway; D-ribose 5-phosphate from D-ribulose 5-phosphate (non-oxidative stage): step 1/1. Catalyzes the reversible conversion of ribose-5-phosphate to ribulose 5-phosphate. In Xanthomonas campestris pv. campestris (strain 8004), this protein is Ribose-5-phosphate isomerase A.